The chain runs to 84 residues: GTP cyclohydrolase 1 feedback regulatory protein (84 aa).

This sequence belongs to the GFRP family. In terms of assembly, homopentamer. Forms a complex with GCH1 where a GCH1 homodecamer is sandwiched by two GFRP homopentamers.

The protein localises to the nucleus. The protein resides in the nucleus membrane. It is found in the cytoplasm. It localises to the cytosol. Its function is as follows. Mediates tetrahydrobiopterin inhibition of GTP cyclohydrolase 1. This chain is GTP cyclohydrolase 1 feedback regulatory protein (gchfr), found in Xenopus laevis (African clawed frog).